A 100-amino-acid chain; its full sequence is Replication restart protein PriB (100 aa).

An SSB domain is found at 1–100 (MTNRMELSGT…VLHADDIIHI (100 aa)).

Belongs to the PriB family. In terms of assembly, homodimer. Interacts with PriA and DnaT. Component of the replication restart primosome. Primosome assembly occurs via a 'hand-off' mechanism. PriA binds to replication forks, subsequently PriB then DnaT bind; DnaT then displaces ssDNA to generate the helicase loading substrate.

Functionally, involved in the restart of stalled replication forks, which reloads the replicative helicase on sites other than the origin of replication; the PriA-PriB pathway is the major replication restart pathway. During primosome assembly it facilitates complex formation between PriA and DnaT on DNA; stabilizes PriA on DNA. Stimulates the DNA unwinding activity of PriA helicase. The sequence is that of Replication restart protein PriB from Vibrio vulnificus (strain CMCP6).